Consider the following 38-residue polypeptide: MKVRPSVKPMCEHCKVIRRKGRVMVICPANPKHKQRQG.

It belongs to the bacterial ribosomal protein bL36 family.

This is Large ribosomal subunit protein bL36 from Enterococcus faecalis (strain ATCC 700802 / V583).